Here is a 78-residue protein sequence, read N- to C-terminus: MAEEKTFEENLQELQQVVSNLEQGDIPLEKALTEFQKGIQLSSELQETLKNAEKTLTKVMQDNGEETNLDLGTDGENE.

Belongs to the XseB family. In terms of assembly, heterooligomer composed of large and small subunits.

The protein localises to the cytoplasm. It carries out the reaction Exonucleolytic cleavage in either 5'- to 3'- or 3'- to 5'-direction to yield nucleoside 5'-phosphates.. Functionally, bidirectionally degrades single-stranded DNA into large acid-insoluble oligonucleotides, which are then degraded further into small acid-soluble oligonucleotides. This Pediococcus pentosaceus (strain ATCC 25745 / CCUG 21536 / LMG 10740 / 183-1w) protein is Exodeoxyribonuclease 7 small subunit.